The sequence spans 361 residues: Trans-2,3-enoyl-CoA reductase-like (361 aa).

Residues Ser33 and Ser35 each carry the phosphoserine modification. A run of 4 helical transmembrane segments spans residues 139–159 (VGWTTVFLAEYSGPLLIYLLF), 181–201 (VHLAFFCHCIHYIRLLLETLF), 215–235 (LIKGCAFYWGFTSWMAYYINH), and 309–329 (ISFTVMTQTLPVGIFTILMTI).

The protein belongs to the steroid 5-alpha reductase family. In terms of tissue distribution, expression is highest in the heart with very low to almost undetectable levels in brain, skeletal muscle, stomach, pancreas, liver, kidney, small intestine, and uterus.

It localises to the membrane. It is found in the endoplasmic reticulum. This chain is Trans-2,3-enoyl-CoA reductase-like (Tecrl), found in Mus musculus (Mouse).